The primary structure comprises 132 residues: Sec-independent protein translocase protein TatB (132 aa).

A helical membrane pass occupies residues 2–22 (FDGIGFMELLLIGILGLVVLG). A disordered region spans residues 68–132 (ENQGLKDLSP…VSANPDKSNR (65 aa)). Residues 102-122 (TPSASSSAPSESTPSEAPTAE) are compositionally biased toward low complexity.

The protein belongs to the TatB family. In terms of assembly, the Tat system comprises two distinct complexes: a TatABC complex, containing multiple copies of TatA, TatB and TatC subunits, and a separate TatA complex, containing only TatA subunits. Substrates initially bind to the TatABC complex, which probably triggers association of the separate TatA complex to form the active translocon.

The protein resides in the cell inner membrane. Its function is as follows. Part of the twin-arginine translocation (Tat) system that transports large folded proteins containing a characteristic twin-arginine motif in their signal peptide across membranes. Together with TatC, TatB is part of a receptor directly interacting with Tat signal peptides. TatB may form an oligomeric binding site that transiently accommodates folded Tat precursor proteins before their translocation. The chain is Sec-independent protein translocase protein TatB from Shewanella woodyi (strain ATCC 51908 / MS32).